Reading from the N-terminus, the 667-residue chain is Threonine--tRNA ligase (667 aa).

The 64-residue stretch at 1–64 folds into the TGS domain; sequence MSEAISLTFP…TDGKIEIVTR (64 aa). The segment at 245-553 is catalytic; it reads DHRRLGREMD…LIENFAGHMP (309 aa). C347, H398, and H530 together coordinate Zn(2+).

The protein belongs to the class-II aminoacyl-tRNA synthetase family. Homodimer. Requires Zn(2+) as cofactor.

It is found in the cytoplasm. It catalyses the reaction tRNA(Thr) + L-threonine + ATP = L-threonyl-tRNA(Thr) + AMP + diphosphate + H(+). Catalyzes the attachment of threonine to tRNA(Thr) in a two-step reaction: L-threonine is first activated by ATP to form Thr-AMP and then transferred to the acceptor end of tRNA(Thr). Also edits incorrectly charged L-seryl-tRNA(Thr). The protein is Threonine--tRNA ligase of Agrobacterium fabrum (strain C58 / ATCC 33970) (Agrobacterium tumefaciens (strain C58)).